A 233-amino-acid polypeptide reads, in one-letter code: Endonuclease V (233 aa).

Mg(2+) contacts are provided by Asp-48 and Asp-116.

This sequence belongs to the endonuclease V family. The cofactor is Mg(2+).

The protein localises to the cytoplasm. It catalyses the reaction Endonucleolytic cleavage at apurinic or apyrimidinic sites to products with a 5'-phosphate.. DNA repair enzyme involved in the repair of deaminated bases. Selectively cleaves double-stranded DNA at the second phosphodiester bond 3' to a deoxyinosine leaving behind the intact lesion on the nicked DNA. The polypeptide is Endonuclease V (Streptomyces coelicolor (strain ATCC BAA-471 / A3(2) / M145)).